Consider the following 33-residue polypeptide: Gastrin (33 aa).

A Pyrrolidone carboxylic acid modification is found at Q1. Y28 carries the sulfotyrosine modification. The residue at position 33 (F33) is a Phenylalanine amide.

Belongs to the gastrin/cholecystokinin family. Post-translationally, sulfation enhances proteolytic processing, and blocks peptide degradation. Levels of sulfation differ between proteolytically-cleaved gastrins and between tissues.

It localises to the secreted. Gastrin stimulates the stomach mucosa to produce and secrete hydrochloric acid and the pancreas to secrete its digestive enzymes. It also stimulates smooth muscle contraction and increases blood circulation and water secretion in the stomach and intestine. The sequence is that of Gastrin (GAST) from Macropus giganteus (Eastern gray kangaroo).